The primary structure comprises 192 residues: Leucine-rich repeat-containing protein 51 (192 aa).

LRR repeat units follow at residues 49-71 (SLTQ…NQVV), 80-101 (NLAW…LTTF), and 103-124 (NLSV…NKLA). Residues 137 to 175 (NPIEEEKGYRQYVLCNLPRITTFDFSGVTKADRSTAEVW) form the LRRCT domain.

Its subcellular location is the cytoplasm. The sequence is that of Leucine-rich repeat-containing protein 51 from Rattus norvegicus (Rat).